A 482-amino-acid polypeptide reads, in one-letter code: tRNA sulfurtransferase (482 aa).

A THUMP domain is found at 61-165 (LAIRDALTRI…DDRLLLIKGR (105 aa)). ATP-binding positions include 183-184 (LI), Lys265, Gly287, and Gln296. The cysteines at positions 344 and 456 are disulfide-linked. In terms of domain architecture, Rhodanese spans 404–482 (FGANDVILDI…GFANVKVYRP (79 aa)). Cys456 functions as the Cysteine persulfide intermediate in the catalytic mechanism.

Belongs to the ThiI family.

It is found in the cytoplasm. It catalyses the reaction [ThiI sulfur-carrier protein]-S-sulfanyl-L-cysteine + a uridine in tRNA + 2 reduced [2Fe-2S]-[ferredoxin] + ATP + H(+) = [ThiI sulfur-carrier protein]-L-cysteine + a 4-thiouridine in tRNA + 2 oxidized [2Fe-2S]-[ferredoxin] + AMP + diphosphate. The enzyme catalyses [ThiS sulfur-carrier protein]-C-terminal Gly-Gly-AMP + S-sulfanyl-L-cysteinyl-[cysteine desulfurase] + AH2 = [ThiS sulfur-carrier protein]-C-terminal-Gly-aminoethanethioate + L-cysteinyl-[cysteine desulfurase] + A + AMP + 2 H(+). Its pathway is cofactor biosynthesis; thiamine diphosphate biosynthesis. Functionally, catalyzes the ATP-dependent transfer of a sulfur to tRNA to produce 4-thiouridine in position 8 of tRNAs, which functions as a near-UV photosensor. Also catalyzes the transfer of sulfur to the sulfur carrier protein ThiS, forming ThiS-thiocarboxylate. This is a step in the synthesis of thiazole, in the thiamine biosynthesis pathway. The sulfur is donated as persulfide by IscS. The sequence is that of tRNA sulfurtransferase from Salmonella arizonae (strain ATCC BAA-731 / CDC346-86 / RSK2980).